The following is a 392-amino-acid chain: Putative RNA-binding protein Luc7-like 2 (392 aa).

Phosphoserine is present on Ser18. Positions 102-177 (EVSKKRLAET…EAEEVYRNSM (76 aa)) form a coiled coil. The span at 235–257 (KQEKRNQERLKRREEREREEREK) shows a compositional bias: basic and acidic residues. Positions 235–392 (KQEKRNQERL…SSEEREAGEI (158 aa)) are disordered. Positions 258-321 (LRRSRSHSKN…RSRSHQRSRH (64 aa)) are enriched in basic residues. A 5-hydroxylysine; by JMJD6 mark is found at Lys266 and Lys269. Basic and acidic residues-rich tracts occupy residues 337 to 364 (KERF…DRDR) and 377 to 392 (RSED…AGEI).

It belongs to the Luc7 family. In terms of assembly, interacts with SCNM1. As to expression, all isoforms are expressed in brain, kidney, heart, thymus, stomach, skeletal muscle, testis and spinal cord.

The protein resides in the nucleus speckle. It localises to the nucleus. It is found in the nucleoplasm. Its function is as follows. May bind to RNA via its Arg/Ser-rich domain. In Mus musculus (Mouse), this protein is Putative RNA-binding protein Luc7-like 2 (Luc7l2).